Here is a 243-residue protein sequence, read N- to C-terminus: Adenosylcobinamide-GDP ribazoletransferase (243 aa).

Helical transmembrane passes span 31 to 51 (LLFYPLVGAVFGTLLLGFNTL), 55 to 75 (APLMLHAALVLTAWVLLSGGL), 109 to 129 (IAVVTLVLVLLLKFAAILALI), 133 to 153 (ASVWLLLAPVIGRAAMLGLFL), and 188 to 208 (VLLAGWSGVAVLLVCAVCFFW).

The protein belongs to the CobS family. Requires Mg(2+) as cofactor.

The protein localises to the cell inner membrane. It carries out the reaction alpha-ribazole + adenosylcob(III)inamide-GDP = adenosylcob(III)alamin + GMP + H(+). It catalyses the reaction alpha-ribazole 5'-phosphate + adenosylcob(III)inamide-GDP = adenosylcob(III)alamin 5'-phosphate + GMP + H(+). The protein operates within cofactor biosynthesis; adenosylcobalamin biosynthesis; adenosylcobalamin from cob(II)yrinate a,c-diamide: step 7/7. In terms of biological role, joins adenosylcobinamide-GDP and alpha-ribazole to generate adenosylcobalamin (Ado-cobalamin). Also synthesizes adenosylcobalamin 5'-phosphate from adenosylcobinamide-GDP and alpha-ribazole 5'-phosphate. This chain is Adenosylcobinamide-GDP ribazoletransferase, found in Pseudomonas syringae pv. syringae (strain B728a).